An 886-amino-acid chain; its full sequence is MKSHEIRQSFLDFFAQKGHTIVRSAPVIPADDPTLLFTNAGMNQFKDVFLDKGSRPYVRAADTQKCIRASGKHNDLEDVGRDTYHHTFFEMLGNWSFGDYYKLEAITWAWELFTVVWKLPKERLYATVYQDDDESFQIWKEQTDINPDHILRFGDKDNFWEMGETGPCGPCSEIHIDLTPDGSGKELVNVGDYRVIELWNLVFIQYNRQSDGHLEPLPKKHVDTGMGFERIVAVMQGKGSNYDSDVFQPLFDKITEITGVRYGASLDAPNDIAMRVIADHARTLTFALSDGAMPSNEGRGYVLRRILRRALRYSRNLGYHQPILHQLVGTLALAMGEVFPELVQRQEAVSAIIKAEEESFIVTLDRGIDLFSELVEKLRASNGKVIAGSDAFRLYDTYGFPFDLTRLMAADEGFEVDGEGFEHCMQEQKNRARSDRREKQRVDDDGAKWQWFSDVRASQFVGYDHLVHSATITGIRQGNGKLLLVLDATPFYAESGGQTGDNGWLENSRYRLHVADTVKDGDAIVHVVSDAFDKVQDSAVQPEDVEIVEQELAVAASVHRTARQDAERNHTATHLMHAALRRILGEHVQQKGSFVSPERLRFDFSHFSKLTDEEIEAVEIAVNTQIREAEPVVKHADVLFDDAVAKGALAFFGDKYADRVRVVEIPGMSVELCGGTHVDNIGRIGLFKIISEASVASGVRRIEAVTGKAAEKLLWQEYRELQQIRQLLKAKGDEAVVEKVAGLMDSKKELEKELAESRAAALVEQLTAALQAAPEVSGCRVLAIEVKNNDGETMRQATMALRDKAPCAVGLLATVEAGKVVLVSFATDEAVRTCSLDAGALIREAAKQVQGGGGGKAEFATAGGKQPENLSKALDAFTAAVRAKLG.

The Zn(2+) site is built by His570, His574, Cys673, and His677.

Belongs to the class-II aminoacyl-tRNA synthetase family. The cofactor is Zn(2+).

The protein resides in the cytoplasm. It carries out the reaction tRNA(Ala) + L-alanine + ATP = L-alanyl-tRNA(Ala) + AMP + diphosphate. Functionally, catalyzes the attachment of alanine to tRNA(Ala) in a two-step reaction: alanine is first activated by ATP to form Ala-AMP and then transferred to the acceptor end of tRNA(Ala). Also edits incorrectly charged Ser-tRNA(Ala) and Gly-tRNA(Ala) via its editing domain. The polypeptide is Alanine--tRNA ligase (Chlorobium chlorochromatii (strain CaD3)).